Reading from the N-terminus, the 168-residue chain is Envelope glycoprotein L (168 aa).

The first 22 residues, 1-22 (MMWKWVTLLLFVLVCGDNPVNA), serve as a signal peptide directing secretion. An interaction with gH region spans residues 25 to 138 (HNPFVCCHQK…TDSSGFKNNL (114 aa)).

Belongs to the herpesviridae glycoprotein L family. As to quaternary structure, interacts with glycoprotein H (gH); this interaction is necessary for the correct processing and cell surface expression of gH. The heterodimer gH/gL seems to interact with gB trimers during fusion.

It is found in the virion membrane. Its subcellular location is the host cell membrane. The protein resides in the host Golgi apparatus. The protein localises to the host trans-Golgi network. The heterodimer glycoprotein H-glycoprotein L is required for the fusion of viral and plasma membranes leading to virus entry into the host cell. Acts as a functional inhibitor of gH and maintains gH in an inhibited form. Upon binding to host integrins, gL dissociates from gH leading to activation of the viral fusion glycoproteins gB and gH. The chain is Envelope glycoprotein L from Connochaetes taurinus (Blue wildebeest).